Here is a 212-residue protein sequence, read N- to C-terminus: Redox-sensing transcriptional repressor Rex (212 aa).

A DNA-binding region (H-T-H motif) is located at residues 16–55 (IYYRYLNILLDADKTRVSSTELSEAVKVDSATIRRDFSYF). NAD(+) is bound at residue 90–95 (GVGNLG).

The protein belongs to the transcriptional regulatory Rex family. Homodimer.

Its subcellular location is the cytoplasm. Modulates transcription in response to changes in cellular NADH/NAD(+) redox state. The sequence is that of Redox-sensing transcriptional repressor Rex from Levilactobacillus brevis (strain ATCC 367 / BCRC 12310 / CIP 105137 / JCM 1170 / LMG 11437 / NCIMB 947 / NCTC 947) (Lactobacillus brevis).